The sequence spans 345 residues: Nuclear distribution protein nudE-like 1 (345 aa).

Residues 28-190 (QSFQEARDEL…LAVRERQQEV (163 aa)) are a coiled coil. The tract at residues 56-166 (VQAEQRNRDL…LDEKESLLVS (111 aa)) is self-association. The segment at 64 to 189 (DLQADNQRLK…ELAVRERQQE (126 aa)) is interaction with KATNB1. Residues 114–133 (YVRELEQANDDLERAKRATI) form a required for interaction with PAFAH1B1 region. Residues 175 to 345 (RDLRQELAVR…SAPGMLPLSV (171 aa)) are interaction with CENPF. Residues 189–256 (EVTRKSAPSS…SARISALNIV (68 aa)) are interaction with YWHAE. The interval 191-345 (TRKSAPSSPT…SAPGMLPLSV (155 aa)) is interaction with NEFL. An interaction with KATNA1 region spans residues 195-256 (APSSPTLDCE…SARISALNIV (62 aa)). Ser215 carries the post-translational modification Phosphoserine. Position 219 is a phosphothreonine; by CDK1 and MAPK1 (Thr219). At Ser231 the chain carries Phosphoserine. Positions 241-280 (TSPLTPSARISALNIVGDLLRKVGALESKLAACRNFAKDQ) are interaction with DISC1. Residue Ser242 is modified to Phosphoserine; by CDK1. Thr245 bears the Phosphothreonine; by CDK1 and MAPK1 mark. The segment at 256 to 291 (VGDLLRKVGALESKLAACRNFAKDQASRKSYISGNV) is required for localization to the centrosome and interaction with dynein, dynactin, tubulin gamma, PCM1 and PCNT. Cys273 carries the S-palmitoyl cysteine; by ZDHHC2, ZDHHC3 and ZDHHC7 lipid modification. The disordered stretch occupies residues 315 to 345 (GAVNGFDPAPPPPGLGSSRPSSAPGMLPLSV). The span at 329 to 339 (LGSSRPSSAPG) shows a compositional bias: low complexity. Ser344 bears the Phosphoserine mark.

This sequence belongs to the nudE family. In terms of assembly, interacts with PLEKHM1 (via N- and C-terminus). Interacts with YWHAE. Interacts directly with NEFL and indirectly with NEFH. Interacts with microtubules. Self-associates. Interacts with DISC1, dynein, dynactin, tubulin gamma, KATNA1, KATNB1, PAFAH1B1, PCM1 and PCNT. Interacts (via C-terminus) with CENPF. Interacts with ZNF365. Interacts with GTP-bound RAB9A; the interaction may lead to RAB9A-dynein motor tethering. Phosphorylated in mitosis. Can be phosphorylated by CDK1, CDK5 and MAPK1. Phosphorylation by CDK5 promotes interaction with KATNA1 and YWHAE. In terms of processing, palmitoylation at Cys-273 reduces affinity for dynein. In terms of tissue distribution, expressed in brain, heart, kidney, liver, lung, pancreas, placenta and skeletal muscle.

The protein resides in the cytoplasm. The protein localises to the cytoskeleton. It localises to the microtubule organizing center. It is found in the centrosome. Its subcellular location is the chromosome. The protein resides in the centromere. The protein localises to the kinetochore. It localises to the spindle. In terms of biological role, required for organization of the cellular microtubule array and microtubule anchoring at the centrosome. May regulate microtubule organization at least in part by targeting the microtubule severing protein KATNA1 to the centrosome. Also positively regulates the activity of the minus-end directed microtubule motor protein dynein. May enhance dynein-mediated microtubule sliding by targeting dynein to the microtubule plus ends. Required for several dynein- and microtubule-dependent processes such as the maintenance of Golgi integrity, the centripetal motion of secretory vesicles and the coupling of the nucleus and centrosome. Also required during brain development for the migration of newly formed neurons from the ventricular/subventricular zone toward the cortical plate. Plays a role, together with DISC1, in the regulation of neurite outgrowth. Required for mitosis in some cell types but appears to be dispensible for mitosis in cortical neuronal progenitors, which instead requires NDE1. Facilitates the polymerization of neurofilaments from the individual subunits NEFH and NEFL. Positively regulates lysosome peripheral distribution and ruffled border formation in osteoclasts. Plays a role, together with DISC1, in the regulation of neurite outgrowth. May act as a RAB9A/B effector that tethers RAB9-associated late endosomes to the dynein motor for their retrograde transport to the trans-Golgi network. This is Nuclear distribution protein nudE-like 1 (NDEL1) from Homo sapiens (Human).